The following is a 403-amino-acid chain: JmjC domain-containing histone demethylation protein 1 (403 aa).

A JmjC domain is found at 141 to 328 (WSLREWCNYF…QQLKIVDVEK (188 aa)). A substrate-binding site is contributed by T221. Fe cation contacts are provided by H224 and D226. K241 is a substrate binding site. Residue H296 coordinates Fe cation.

It belongs to the JHDM1 histone demethylase family. Fe(2+) is required as a cofactor.

Its subcellular location is the nucleus. The enzyme catalyses N(6),N(6)-dimethyl-L-lysyl(36)-[histone H3] + 2 2-oxoglutarate + 2 O2 = L-lysyl(36)-[histone H3] + 2 formaldehyde + 2 succinate + 2 CO2. Its function is as follows. Histone demethylase that specifically demethylates 'Lys-36' of histone H3, thereby playing a central role in histone code. The sequence is that of JmjC domain-containing histone demethylation protein 1 (JHD1) from Candida glabrata (strain ATCC 2001 / BCRC 20586 / JCM 3761 / NBRC 0622 / NRRL Y-65 / CBS 138) (Yeast).